The following is a 312-amino-acid chain: Putative S-adenosyl-L-methionine-dependent methyltransferase BCG_1768c (312 aa).

S-adenosyl-L-methionine-binding positions include D130 and 159-160; that span reads DL.

This sequence belongs to the UPF0677 family.

In terms of biological role, exhibits S-adenosyl-L-methionine-dependent methyltransferase activity. The chain is Putative S-adenosyl-L-methionine-dependent methyltransferase BCG_1768c from Mycobacterium bovis (strain BCG / Pasteur 1173P2).